Reading from the N-terminus, the 62-residue chain is Large ribosomal subunit protein bL28 (62 aa).

The protein belongs to the bacterial ribosomal protein bL28 family.

The polypeptide is Large ribosomal subunit protein bL28 (Helicobacter acinonychis (strain Sheeba)).